Here is an 89-residue protein sequence, read N- to C-terminus: Small ribosomal subunit protein uS15 (89 aa).

Belongs to the universal ribosomal protein uS15 family. Part of the 30S ribosomal subunit. Forms a bridge to the 50S subunit in the 70S ribosome, contacting the 23S rRNA.

One of the primary rRNA binding proteins, it binds directly to 16S rRNA where it helps nucleate assembly of the platform of the 30S subunit by binding and bridging several RNA helices of the 16S rRNA. In terms of biological role, forms an intersubunit bridge (bridge B4) with the 23S rRNA of the 50S subunit in the ribosome. In Clavibacter michiganensis subsp. michiganensis (strain NCPPB 382), this protein is Small ribosomal subunit protein uS15.